The chain runs to 295 residues: Elongation factor Ts (295 aa).

The involved in Mg(2+) ion dislocation from EF-Tu stretch occupies residues 79-82 (TDFV).

The protein belongs to the EF-Ts family.

The protein localises to the cytoplasm. In terms of biological role, associates with the EF-Tu.GDP complex and induces the exchange of GDP to GTP. It remains bound to the aminoacyl-tRNA.EF-Tu.GTP complex up to the GTP hydrolysis stage on the ribosome. In Bacillus cytotoxicus (strain DSM 22905 / CIP 110041 / 391-98 / NVH 391-98), this protein is Elongation factor Ts.